The sequence spans 497 residues: Cysteine-rich secretory protein LCCL domain-containing 2 (497 aa).

A signal peptide spans Met-1–Gly-22. Asn-27 is a glycosylation site (N-linked (GlcNAc...) asparagine). Residues Leu-62–Tyr-200 form the SCP domain. LCCL domains lie at Met-284–Phe-379 and Lys-385–Lys-488. Intrachain disulfides connect Cys-290–Cys-308, Cys-312–Cys-332, Cys-391–Cys-413, and Cys-417–Cys-440.

The protein belongs to the CRISP family. Binds to heparin, dermatan sulfate and chondroitin sulfate.

The protein localises to the secreted. In terms of biological role, promotes matrix assembly. This Homo sapiens (Human) protein is Cysteine-rich secretory protein LCCL domain-containing 2 (CRISPLD2).